Reading from the N-terminus, the 692-residue chain is FMR1-interacting protein NUFIP2 (692 aa).

The interval 1-100 is disordered; the sequence is MEEKPGQPQP…KKTGYGEING (100 aa). 2 stretches are compositionally biased toward basic residues: residues 11–23 and 31–54; these read QHHHSHHHPHHHP and SHHHHHYYFYNHSHNHHHHHHHQQ. A Glycyl lysine isopeptide (Lys-Gly) (interchain with G-Cter in SUMO2) cross-link involves residue Lys79. Thr88 bears the Phosphothreonine mark. Residue Lys110 forms a Glycyl lysine isopeptide (Lys-Gly) (interchain with G-Cter in SUMO2) linkage. Ser113 and Ser114 each carry phosphoserine. Glycyl lysine isopeptide (Lys-Gly) (interchain with G-Cter in SUMO2) cross-links involve residues Lys137, Lys147, Lys158, and Lys172. A disordered region spans residues 205-233; the sequence is SKGADNDGSGSESGYTTPKKRKARRNSAK. A phosphoserine mark is found at Ser213 and Ser215. Position 219 is a phosphotyrosine (Tyr219). 2 positions are modified to phosphothreonine: Thr220 and Thr221. Over residues 222 to 231 the composition is skewed to basic residues; that stretch reads PKKRKARRNS. Residues Lys262 and Lys281 each participate in a glycyl lysine isopeptide (Lys-Gly) (interchain with G-Cter in SUMO2) cross-link. Disordered stretches follow at residues 277–337 and 369–401; these read KPIW…WTLF and TVQNSSVSPSSSSSSSSTGETQTQSSSRLSQVP. Arg291 carries the omega-N-methylarginine modification. Lys293 participates in a covalent cross-link: Glycyl lysine isopeptide (Lys-Gly) (interchain with G-Cter in SUMO2). Residue Ser304 is modified to Phosphoserine. A Glycyl lysine isopeptide (Lys-Gly) (interchain with G-Cter in SUMO2) cross-link involves residue Lys307. A compositionally biased stretch (low complexity) spans 371–395; sequence QNSSVSPSSSSSSSSTGETQTQSSS. Ser376 is subject to Phosphoserine. A Phosphothreonine modification is found at Thr569. Phosphoserine occurs at positions 570, 589, 605, and 626. A Phosphothreonine modification is found at Thr630. A phosphoserine mark is found at Ser634, Ser649, Ser652, and Ser689.

Interacts with FMR1 (via N-terminus). Interacts with DDX6.

It is found in the nucleus. Its subcellular location is the cytoplasm. The protein resides in the stress granule. Functionally, binds RNA. This is FMR1-interacting protein NUFIP2 (Nufip2) from Mus musculus (Mouse).